Consider the following 108-residue polypeptide: Thiosulfate sulfurtransferase GlpE (108 aa).

The Rhodanese domain occupies 17–105; sequence HQGTAVLVDI…WHRHFPSEVA (89 aa). Residue cysteine 65 is the Cysteine persulfide intermediate of the active site.

The protein belongs to the GlpE family.

It localises to the cytoplasm. It catalyses the reaction thiosulfate + hydrogen cyanide = thiocyanate + sulfite + 2 H(+). The enzyme catalyses thiosulfate + [thioredoxin]-dithiol = [thioredoxin]-disulfide + hydrogen sulfide + sulfite + 2 H(+). Its function is as follows. Transferase that catalyzes the transfer of sulfur from thiosulfate to thiophilic acceptors such as cyanide or dithiols. May function in a CysM-independent thiosulfate assimilation pathway by catalyzing the conversion of thiosulfate to sulfite, which can then be used for L-cysteine biosynthesis. In Citrobacter koseri (strain ATCC BAA-895 / CDC 4225-83 / SGSC4696), this protein is Thiosulfate sulfurtransferase GlpE.